We begin with the raw amino-acid sequence, 105 residues long: Toxin ParE2 (105 aa).

This sequence belongs to the RelE toxin family.

In terms of biological role, toxic component of a type II toxin-antitoxin (TA) system. Its toxic effect is neutralized by coexpression with cognate antitoxin ParD2. The protein is Toxin ParE2 (parE2) of Mycobacterium tuberculosis (strain CDC 1551 / Oshkosh).